Consider the following 129-residue polypeptide: 4-amino-4-deoxychorismate mutase (129 aa).

Positions 16–107 constitute a Chorismate mutase domain; sequence AAATDPLDAL…ETCRLEDEWI (92 aa).

The catalysed reaction is 4-amino-4-deoxychorismate = 4-amino-4-deoxyprephenate. The protein operates within antibiotic biosynthesis. In terms of biological role, involved in pristinamycin I biosynthesis. Probably catalyzes the conversion of 4-amino-4-deoxychorismate to 4-amino-4-deoxyprephenate. This Streptomyces pristinaespiralis protein is 4-amino-4-deoxychorismate mutase.